The chain runs to 268 residues: Membrane lipoprotein TpN32 (268 aa).

Positions 1–23 are cleaved as a signal peptide; the sequence is MKGKTVSAALVGKLIALSVGVVA. Cys24 carries the N-palmitoyl cysteine lipid modification. Cys24 is lipidated: S-diacylglycerol cysteine.

It belongs to the NlpA lipoprotein family.

The protein localises to the cell membrane. The sequence is that of Membrane lipoprotein TpN32 (tpn32) from Treponema pallidum (strain Nichols).